Consider the following 154-residue polypeptide: SsrA-binding protein (154 aa).

It belongs to the SmpB family.

The protein resides in the cytoplasm. Required for rescue of stalled ribosomes mediated by trans-translation. Binds to transfer-messenger RNA (tmRNA), required for stable association of tmRNA with ribosomes. tmRNA and SmpB together mimic tRNA shape, replacing the anticodon stem-loop with SmpB. tmRNA is encoded by the ssrA gene; the 2 termini fold to resemble tRNA(Ala) and it encodes a 'tag peptide', a short internal open reading frame. During trans-translation Ala-aminoacylated tmRNA acts like a tRNA, entering the A-site of stalled ribosomes, displacing the stalled mRNA. The ribosome then switches to translate the ORF on the tmRNA; the nascent peptide is terminated with the 'tag peptide' encoded by the tmRNA and targeted for degradation. The ribosome is freed to recommence translation, which seems to be the essential function of trans-translation. In Staphylococcus saprophyticus subsp. saprophyticus (strain ATCC 15305 / DSM 20229 / NCIMB 8711 / NCTC 7292 / S-41), this protein is SsrA-binding protein.